Consider the following 536-residue polypeptide: Cytoplasmic dynein 2 intermediate chain 2 (536 aa).

Ser-15 bears the Phosphoserine mark. The segment at 80 to 93 (RNHVDAQVQTEAPV) is DYNLL2 binding. Residues 106 to 131 (PRLAAFLRRVEAMVIRELNKNWQSHA) form a DYNLRB1 binding region. 5 WD repeats span residues 215–255 (EVPS…DPLL), 264–308 (THTD…QLQL), 390–430 (PHGG…PLTS), 433–473 (LSLK…QKPT), and 480–520 (QDES…TEQG).

This sequence belongs to the dynein light intermediate chain family. In terms of assembly, the cytoplasmic dynein 2 complex consists of two catalytic heavy chains (HCs) and a number of non-catalytic subunits presented by intermediate chains (ICs), light intermediate chains (LICs) and light chains (LCs). Among them, a heavy chain (DYNC2H1), two intermediate chains (DYNC2I2 and DYNC2I1), a light intermediate chain (DYNC2LI1), and a light chain (DYNLT2B) are unique to the cytoplasmic dynein complex 2, but a subset of the light chains are also shared by dynein-1 and dynein-2 complexes. Interacts with DYNC2I1; their C-terminal domains each bind a copy of the heavy chain, and their extended N-terminal regions are held together by an array of light chain dimers. Interacts with DYNLL2; this interaction is essential for dynein-2-mediated retrograde trafficking of ciliary proteins. Interacts with DYNLRB1; this interaction is essential for dynein-2-mediated retrograde trafficking of ciliary proteins. Interacts (via the WD domains) with MAP3K7 and TAB3. Interacts (via WD domains) with TAB2 (via C-terminus). Interacts (via WD domains) with TRAF6 (via TRAF-type domains). As to expression, expressed in several cell lines (at protein level).

It localises to the cytoplasm. The protein resides in the cytoskeleton. Its subcellular location is the cilium basal body. It is found in the cilium axoneme. The protein localises to the microtubule organizing center. It localises to the centrosome. The protein resides in the cell projection. Its subcellular location is the cilium. It is found in the filopodium. In terms of biological role, acts as one of several non-catalytic accessory components of the cytoplasmic dynein 2 complex (dynein-2 complex), a motor protein complex that drives the movement of cargos along microtubules within cilia and flagella in concert with the intraflagellar transport (IFT) system. DYNC2I2 plays a major role in retrograde ciliary protein trafficking and in ciliogenesis. Required also to maintain a functional transition zone. Its function is as follows. Acts as a negative regulator of the Toll-like and IL-1R receptor signaling pathways. Inhibits the MAP3K7-induced NF-kappa-B activation pathway. Inhibits MAP3K7 phosphorylation at 'Thr-184' and 'Thr-187' upon Il-1 beta stimulation. The chain is Cytoplasmic dynein 2 intermediate chain 2 from Homo sapiens (Human).